Reading from the N-terminus, the 259-residue chain is Proteasome subunit alpha 1 (259 aa).

Residues 231 to 259 (LVPAEPAAASESAPEPKPDTETKPADTQD) are disordered. A compositionally biased stretch (low complexity) spans 233–243 (PAEPAAASESA). Positions 244-259 (PEPKPDTETKPADTQD) are enriched in basic and acidic residues.

The protein belongs to the peptidase T1A family. As to quaternary structure, the 20S proteasome core is composed of 14 alpha and 14 beta subunits that assemble into four stacked heptameric rings, resulting in a barrel-shaped structure. The two inner rings, each composed of seven catalytic beta subunits, are sandwiched by two outer rings, each composed of seven alpha subunits. All four combinations of alpha- and beta-subunits (beta2-alpha1, beta2-alpha2, beta1-alpha2 and beta1-alpha1) yield fully assembled and proteolytically active proteasomes. The catalytic chamber with the active sites is on the inside of the barrel. Has probably a gated structure, the ends of the cylinder being occluded by the N-termini of the alpha-subunits. Is likely capped by the proteasome-associated ATPase, ARC. The N-terminus is blocked.

Its subcellular location is the cytoplasm. It participates in protein degradation; proteasomal Pup-dependent pathway. With respect to regulation, the formation of the proteasomal ATPase ARC-20S proteasome complex, likely via the docking of the C-termini of ARC into the intersubunit pockets in the alpha-rings, may trigger opening of the gate for substrate entry. Interconversion between the open-gate and close-gate conformations leads to a dynamic regulation of the 20S proteasome proteolysis activity. Its function is as follows. Component of the proteasome core, a large protease complex with broad specificity involved in protein degradation. The R.erythropolis proteasomes are able to cleave oligopeptides after Tyr, Phe and Leu, very poorly after Arg but not after Glu. Thus, displays chymotrypsin-like activity, low trypsin-like activity but no caspase-like activity. In Rhodococcus erythropolis (Arthrobacter picolinophilus), this protein is Proteasome subunit alpha 1.